The sequence spans 93 residues: Protein 6 (93 aa).

Residues 1–16 (MSSQQETNDKSNTQGH) show a composition bias toward polar residues. A disordered region spans residues 1–52 (MSSQQETNDKSNTQGHPETDPEGKTGTDTGNTEDSPPDTDNVPITDDAIMDD).

It localises to the virion. This Rice yellow stunt virus (RYSV) protein is Protein 6 (6).